The primary structure comprises 101 residues: Ubiquitin-related modifier 1 homolog (101 aa).

A 1-thioglycine modification is found at glycine 101. Glycine 101 is covalently cross-linked (Glycyl lysine isopeptide (Gly-Lys) (interchain with K-? in acceptor proteins)).

It belongs to the URM1 family. As to quaternary structure, interacts with cer. In terms of processing, C-terminal thiocarboxylation occurs in 2 steps, it is first acyl-adenylated (-COAMP) via the hesA/moeB/thiF part of the MOCS3 homolog, then thiocarboxylated (-COSH) via the rhodanese domain of the MOCS3 homolog.

It localises to the cytoplasm. The protein operates within tRNA modification; 5-methoxycarbonylmethyl-2-thiouridine-tRNA biosynthesis. In terms of biological role, acts as a sulfur carrier required for 2-thiolation of mcm(5)S(2)U at tRNA wobble positions of cytosolic tRNA(Lys), tRNA(Glu) and tRNA(Gln). Serves as sulfur donor in tRNA 2-thiolation reaction by being thiocarboxylated (-COSH) at its C-terminus by MOCS3. The sulfur is then transferred to tRNA to form 2-thiolation of mcm(5)S(2)U. Also acts as a ubiquitin-like protein (UBL) that is covalently conjugated via an isopeptide bond to lysine residues of target proteins such as Prx2/Jafrac1, Ciao1, Eip71CD and GILT1. The thiocarboxylated form serves as substrate for conjugation and oxidative stress specifically induces the formation of UBL-protein conjugates. The chain is Ubiquitin-related modifier 1 homolog from Drosophila sechellia (Fruit fly).